Reading from the N-terminus, the 340-residue chain is GTP 3',8-cyclase (340 aa).

A Radical SAM core domain is found at 20-246 (RFQRQYTYLR…PKAVNDGPAK (227 aa)). Arg-29 is a binding site for GTP. Residues Cys-36 and Cys-40 each contribute to the [4Fe-4S] cluster site. Tyr-42 contributes to the S-adenosyl-L-methionine binding site. [4Fe-4S] cluster is bound at residue Cys-43. Arg-79 is a binding site for GTP. Gly-83 is an S-adenosyl-L-methionine binding site. Thr-110 is a GTP binding site. Ser-134 lines the S-adenosyl-L-methionine pocket. Lys-171 is a binding site for GTP. Met-205 is a binding site for S-adenosyl-L-methionine. [4Fe-4S] cluster is bound by residues Cys-268 and Cys-271. 273–275 (RLR) is a binding site for GTP. [4Fe-4S] cluster is bound at residue Cys-285.

Belongs to the radical SAM superfamily. MoaA family. In terms of assembly, monomer and homodimer. The cofactor is [4Fe-4S] cluster.

It catalyses the reaction GTP + AH2 + S-adenosyl-L-methionine = (8S)-3',8-cyclo-7,8-dihydroguanosine 5'-triphosphate + 5'-deoxyadenosine + L-methionine + A + H(+). The protein operates within cofactor biosynthesis; molybdopterin biosynthesis. Its function is as follows. Catalyzes the cyclization of GTP to (8S)-3',8-cyclo-7,8-dihydroguanosine 5'-triphosphate. The chain is GTP 3',8-cyclase from Haemophilus ducreyi (strain 35000HP / ATCC 700724).